The chain runs to 106 residues: Large ribosomal subunit protein bL21 (106 aa).

This sequence belongs to the bacterial ribosomal protein bL21 family. As to quaternary structure, part of the 50S ribosomal subunit. Contacts protein L20.

In terms of biological role, this protein binds to 23S rRNA in the presence of protein L20. This Chlamydia abortus (strain DSM 27085 / S26/3) (Chlamydophila abortus) protein is Large ribosomal subunit protein bL21.